Here is a 227-residue protein sequence, read N- to C-terminus: Ubiquitin domain-containing protein 1 (227 aa).

Positions 1–35 (MGNCVGRQRRERPAAPGHPRKRAGRNEPLKKERLK) are disordered. Residues 24 to 35 (GRNEPLKKERLK) are compositionally biased toward basic and acidic residues. The 76-residue stretch at 149–224 (FPLKVRLSTG…IQVIINQPPP (76 aa)) folds into the Ubiquitin-like domain.

As to quaternary structure, interacts with UBTD1.

Functionally, may be involved in the regulation of cellular senescence through a positive feedback loop with TP53. Is a TP53 downstream target gene that increases the stability of TP53 protein by promoting the ubiquitination and degradation of MDM2. This is Ubiquitin domain-containing protein 1 (Ubtd1) from Rattus norvegicus (Rat).